Reading from the N-terminus, the 457-residue chain is Glycine receptor subunit alpha-1 (457 aa).

The first 28 residues, 1 to 28 (MYSFNTLRLYLWETIVFFSLAASKEAEA), serve as a signal peptide directing secretion. Topologically, residues 29-250 (ARSAPKPMSP…RFHLERQMGY (222 aa)) are extracellular. An N-linked (GlcNAc...) asparagine glycan is attached at Asn66. Glycine is bound by residues Arg93 and Ser157. The cysteines at positions 166 and 180 are disulfide-linked. Zn(2+) contacts are provided by Glu220 and Asp222. A disulfide bridge connects residues Cys226 and Cys237. A strychnine-binding site is contributed by 230–235 (YNTGKF). Residue Thr232 coordinates glycine. His243 provides a ligand contact to Zn(2+). The helical transmembrane segment at 251–272 (YLIQMYIPSLLIVILSWISFWI) threads the bilayer. At 273 to 277 (NMDAA) the chain is on the cytoplasmic side. A helical transmembrane segment spans residues 278-298 (PARVGLGITTVLTMTTQSSGS). At 299–309 (RASLPKVSYVK) the chain is on the extracellular side. The helical transmembrane segment at 310-330 (AIDIWMAVCLLFVFSALLEYA) threads the bilayer. At 331-425 (AVNFVSRQHK…FIQRAKKIDK (95 aa)) the chain is on the cytoplasmic side. Positions 391–410 (KGANNSNTTNPPPAPSKSPE) are disordered. The helical transmembrane segment at 426-446 (ISRIGFPMAFLIFNMFYWIIY) threads the bilayer. Over 447 to 457 (KIVRREDVHNQ) the chain is Extracellular.

Belongs to the ligand-gated ion channel (TC 1.A.9) family. Glycine receptor (TC 1.A.9.3) subfamily. GLRA1 sub-subfamily. Interacts with GLRB to form heteropentameric channels; this is probably the predominant form in vivo. Heteropentamer composed of four GLRA1 subunits and one GLRB subunit. Heteropentamer composed of two GLRA1 and three GLRB. Heteropentamer composed of three GLRA1 and two GLRB. Homopentamer (in vitro). Both homopentamers and heteropentamers form functional ion channels, but their characteristics are subtly different.

The protein localises to the postsynaptic cell membrane. It localises to the synapse. It is found in the perikaryon. Its subcellular location is the cell projection. The protein resides in the dendrite. The protein localises to the cell membrane. It carries out the reaction chloride(in) = chloride(out). Channel opening is triggered by extracellular glycine. Channel characteristics depend on the subunit composition; heteropentameric channels are activated by lower glycine levels and display faster desensitization. Channel opening is also triggered by taurine and beta-alanine. Channel activity is potentiated by nanomolar concentrations of Zn(2+); half-maximal activation is observed with 37 nM Zn(2+). Inhibited by higher Zn(2+) levels; haf-maximal inhibition occurs at 20 uM Zn(2+). Inhibited by strychnine. Strychnine binding locks the channel in a closed conformation and prevents channel opening in response to extracellular glycine. Inhibited by lindane. Inhibited by picrotoxin. Functionally, subunit of heteromeric glycine-gated chloride channels. Plays an important role in the down-regulation of neuronal excitability. Contributes to the generation of inhibitory postsynaptic currents. Channel activity is potentiated by ethanol. Potentiation of channel activity by intoxicating levels of ethanol contribute to the sedative effects of ethanol. This chain is Glycine receptor subunit alpha-1 (GLRA1), found in Homo sapiens (Human).